The primary structure comprises 254 residues: C-X-C motif chemokine 16 (254 aa).

An N-terminal signal peptide occupies residues 1-29 (MGRDLRPGSRVLLLLLLLLLVYLTQPGNG). Residues 30–205 (NEGSVTGSCY…AGPTARTSAT (176 aa)) lie on the Extracellular side of the membrane. Residues 32 to 107 (GSVTGSCYCG…DLKECGHAYS (76 aa)) form a chemokine region. 2 disulfide bridges follow: C38–C68 and C40–C82. The tract at residues 146–165 (QSTQRPTLPVGSLSSDKELT) is disordered. N-linked (GlcNAc...) asparagine glycosylation is present at N168. The segment at 178–200 (SLAAGPEAGENQKQPEKNAGPTA) is disordered. The chain crosses the membrane as a helical span at residues 206–226 (VPVLCLLAIIFILTAALSYVL). The Cytoplasmic segment spans residues 227-254 (CKRRRGQSPQSSPDLPVHYIPVAPDSNT). Residues 231-254 (RGQSPQSSPDLPVHYIPVAPDSNT) form a disordered region.

This sequence belongs to the intercrine alpha (chemokine CxC) family. Glycosylated. As to expression, expressed in T-cell areas. Expressed in spleen, lymph nodes, lung, kidney, small intestine and thymus. Weak expression in heart and liver and no expression in brain and bone marrow.

It localises to the cell membrane. Its subcellular location is the secreted. Acts as a scavenger receptor on macrophages, which specifically binds to OxLDL (oxidized low density lipoprotein), suggesting that it may be involved in pathophysiology such as atherogenesis. Induces a strong chemotactic response. Induces calcium mobilization. Binds to CXCR6/Bonzo. This Homo sapiens (Human) protein is C-X-C motif chemokine 16 (CXCL16).